We begin with the raw amino-acid sequence, 584 residues long: MDRNSVIGLVLISLIMIVWMQFMAPEKKPLQDIDKPAVSLQEEVSPVSDIPAAAATPESYGEFSAMSDGEEKLLTVDNEYFTAVLSSRGATLKSMMLKKHLDSSREQFNLIRKNDSGALSLFFLTQAGKQIDTRDLYFSTAVTESQVTVGADNQFSVTYRLDVAPEKNIVITYTFSGDSYAIGYDISMNGFASEIAGNEFQLQWDGGLVHSEKNDDDELHNSWAAAYMGGSLLKLDASDQSKTYREEQSGVAGWVAARTKYFVAAMIPSSETEGVYLAGKRLAGEPFENYTTALKFRVPSDESSFKESLRLYVGPIDYNVLNALGVNLEKIMDFGWDWLTRPFAEYIILPIFDLLNKFIGNYGLIIIIFAFLIKLVTYPLTMASTKSMKKMSALQPMMKEIQEKYKDNPAKLQSELGRIYKEAGVNPLGGCLPVVLQMPLLFAMFYVFRSSIQLRQHGFLWANDLSVPDSILDFGFSIPLYGDHIALFPILMAVAVFLQQKITPTAQTNDQMKAMIYIFPVMMLLFFNNMPAGLGLYYLMFNVFSIAQTWYINKTASTDDLPALSPVVAAPPKAPKKKKNARKR.

5 helical membrane passes run 5-25 (SVIGLVLISLIMIVWMQFMAP), 358-378 (FIGNYGLIIIIFAFLIKLVTY), 428-448 (LGGCLPVVLQMPLLFAMFYVF), 478-498 (IPLYGDHIALFPILMAVAVFL), and 516-536 (IYIFPVMMLLFFNNMPAGLGL). A disordered region spans residues 563-584 (ALSPVVAAPPKAPKKKKNARKR). The segment covering 574 to 584 (APKKKKNARKR) has biased composition (basic residues).

Belongs to the OXA1/ALB3/YidC family. Type 1 subfamily. In terms of assembly, interacts with the Sec translocase complex via SecD. Specifically interacts with transmembrane segments of nascent integral membrane proteins during membrane integration.

The protein localises to the cell inner membrane. In terms of biological role, required for the insertion and/or proper folding and/or complex formation of integral membrane proteins into the membrane. Involved in integration of membrane proteins that insert both dependently and independently of the Sec translocase complex, as well as at least some lipoproteins. Aids folding of multispanning membrane proteins. In Prosthecochloris aestuarii (strain DSM 271 / SK 413), this protein is Membrane protein insertase YidC.